A 188-amino-acid polypeptide reads, in one-letter code: GMP synthase [glutamine-hydrolyzing] subunit A (188 aa).

The Glutamine amidotransferase type-1 domain occupies 3 to 188 (KVLVVAFGGQ…FQNFVELCKR (186 aa)). The active-site Nucleophile is the cysteine 79. Residues histidine 166 and glutamate 168 contribute to the active site.

Heterodimer composed of a glutamine amidotransferase subunit (A) and a GMP-binding subunit (B).

It carries out the reaction XMP + L-glutamine + ATP + H2O = GMP + L-glutamate + AMP + diphosphate + 2 H(+). Its pathway is purine metabolism; GMP biosynthesis; GMP from XMP (L-Gln route): step 1/1. Its function is as follows. Catalyzes the synthesis of GMP from XMP. The protein is GMP synthase [glutamine-hydrolyzing] subunit A of Ignicoccus hospitalis (strain KIN4/I / DSM 18386 / JCM 14125).